The primary structure comprises 111 residues: Phosphoribosyl-ATP pyrophosphatase (111 aa).

It belongs to the PRA-PH family.

Its subcellular location is the cytoplasm. The catalysed reaction is 1-(5-phospho-beta-D-ribosyl)-ATP + H2O = 1-(5-phospho-beta-D-ribosyl)-5'-AMP + diphosphate + H(+). The protein operates within amino-acid biosynthesis; L-histidine biosynthesis; L-histidine from 5-phospho-alpha-D-ribose 1-diphosphate: step 2/9. This Pseudomonas putida (strain W619) protein is Phosphoribosyl-ATP pyrophosphatase.